The following is a 136-amino-acid chain: uncharacterized protein (136 aa).

Helical transmembrane passes span 10-32 (SAGI…FIWI), 44-66 (LRCG…ILHF), 70-89 (VLLL…KTLL), and 102-124 (IAGV…WLLF).

It localises to the cell membrane. This is an uncharacterized protein from Archaeoglobus fulgidus (strain ATCC 49558 / DSM 4304 / JCM 9628 / NBRC 100126 / VC-16).